Consider the following 253-residue polypeptide: Endonuclease NucS (253 aa).

Belongs to the NucS endonuclease family.

The protein localises to the cytoplasm. Cleaves both 3' and 5' ssDNA extremities of branched DNA structures. This is Endonuclease NucS from Pyrococcus horikoshii (strain ATCC 700860 / DSM 12428 / JCM 9974 / NBRC 100139 / OT-3).